Reading from the N-terminus, the 313-residue chain is Ribosomal RNA small subunit methyltransferase H (313 aa).

Residues 35-37 (GGH), D55, F79, D101, and Q108 each bind S-adenosyl-L-methionine.

The protein belongs to the methyltransferase superfamily. RsmH family.

It localises to the cytoplasm. The enzyme catalyses cytidine(1402) in 16S rRNA + S-adenosyl-L-methionine = N(4)-methylcytidine(1402) in 16S rRNA + S-adenosyl-L-homocysteine + H(+). Functionally, specifically methylates the N4 position of cytidine in position 1402 (C1402) of 16S rRNA. This Klebsiella pneumoniae (strain 342) protein is Ribosomal RNA small subunit methyltransferase H.